We begin with the raw amino-acid sequence, 416 residues long: Fusaric acid cluster transcription factor FUB10 (416 aa).

A DNA-binding region (zn(2)-C6 fungal-type) is located at residues 16 to 47 (CDRCRAQKLRCHRDSGHSTDACLRCLKSGIEC). Residues 50 to 92 (SKARPTGRPPSRQVQPTVSVEQGDTSSSSHTTDSSPSAGGTDI) form a disordered region. Residues 61 to 73 (RQVQPTVSVEQGD) show a composition bias toward polar residues. Positions 74–86 (TSSSSHTTDSSPS) are enriched in low complexity.

It is found in the nucleus. Transcription factor that regulates the expression of the gene cluster that mediates the biosynthesis of fusaric acid, a mycotoxin with low to moderate toxicity to animals and humans, but with high phytotoxic properties. The polypeptide is Fusaric acid cluster transcription factor FUB10 (Fusarium oxysporum f. sp. lycopersici (strain 4287 / CBS 123668 / FGSC 9935 / NRRL 34936) (Fusarium vascular wilt of tomato)).